A 421-amino-acid polypeptide reads, in one-letter code: Serine--tRNA ligase (421 aa).

An L-serine-binding site is contributed by 229–231 (TAE). ATP is bound at residue 260–262 (RSE). L-serine is bound at residue glutamate 283. Residue 347–350 (EISS) coordinates ATP. Serine 382 provides a ligand contact to L-serine.

It belongs to the class-II aminoacyl-tRNA synthetase family. Type-1 seryl-tRNA synthetase subfamily. In terms of assembly, homodimer. The tRNA molecule binds across the dimer.

The protein resides in the cytoplasm. The enzyme catalyses tRNA(Ser) + L-serine + ATP = L-seryl-tRNA(Ser) + AMP + diphosphate + H(+). It catalyses the reaction tRNA(Sec) + L-serine + ATP = L-seryl-tRNA(Sec) + AMP + diphosphate + H(+). It participates in aminoacyl-tRNA biosynthesis; selenocysteinyl-tRNA(Sec) biosynthesis; L-seryl-tRNA(Sec) from L-serine and tRNA(Sec): step 1/1. Catalyzes the attachment of serine to tRNA(Ser). Is also able to aminoacylate tRNA(Sec) with serine, to form the misacylated tRNA L-seryl-tRNA(Sec), which will be further converted into selenocysteinyl-tRNA(Sec). In Symbiobacterium thermophilum (strain DSM 24528 / JCM 14929 / IAM 14863 / T), this protein is Serine--tRNA ligase.